The chain runs to 301 residues: Probable alpha-L-glutamate ligase (301 aa).

One can recognise an ATP-grasp domain in the interval 104-287 (LQFLSRKGID…IAGMIIEFIE (184 aa)). ATP is bound by residues Lys-141, 178–179 (EF), Asp-187, and 211–213 (RSN). Mg(2+) contacts are provided by Asp-248, Glu-260, and Asn-262. Positions 248, 260, and 262 each coordinate Mn(2+).

This sequence belongs to the RimK family. Mg(2+) is required as a cofactor. The cofactor is Mn(2+).

This Coxiella burnetii (strain CbuK_Q154) (Coxiella burnetii (strain Q154)) protein is Probable alpha-L-glutamate ligase.